Consider the following 514-residue polypeptide: Bifunctional lysine-specific demethylase and histidyl-hydroxylase NO66 (514 aa).

The tract at residues 1-53 (MKRGLEEEIEEMSEEEVGVNNNNNGKKKKKKVVKKSKPVPLTKSVPQVSSQPL) is disordered. The segment covering 7-17 (EEIEEMSEEEV) has biased composition (acidic residues). Residues 25–37 (GKKKKKKVVKKSK) show a composition bias toward basic residues. Positions 44–53 (SVPQVSSQPL) are enriched in polar residues. The region spanning 180–327 (CSVRLLNPQT…IGKVLNRALE (148 aa)) is the JmjC domain. Fe cation is bound by residues H226, D228, and H291.

It belongs to the ROX family. NO66 subfamily. It depends on Fe(2+) as a cofactor.

It is found in the nucleus. It catalyses the reaction N(6),N(6)-dimethyl-L-lysyl(36)-[histone H3] + 2 2-oxoglutarate + 2 O2 = L-lysyl(36)-[histone H3] + 2 formaldehyde + 2 succinate + 2 CO2. Oxygenase that can act as both a histone lysine demethylase and a ribosomal histidine hydroxylase. Specifically demethylates 'Lys-4' (H3K4me) and 'Lys-36' (H3K36me) of histone H3, thereby playing a central role in histone code. This Dictyostelium discoideum (Social amoeba) protein is Bifunctional lysine-specific demethylase and histidyl-hydroxylase NO66 (jcdg).